A 580-amino-acid chain; its full sequence is Tyrosyl-DNA phosphodiesterase 1 (580 aa).

Positions 65–117 (ATNKEQEAHSSSSKPAVTAPVASGSSSSGSLDTNPSGSSASGPAASQDTSNLA) are disordered. Residues 87 to 110 (SGSSSSGSLDTNPSGSSASGPAAS) are compositionally biased toward low complexity. His248 functions as the Nucleophile in the catalytic mechanism. Residue Lys250 coordinates substrate. The interval 387–390 (SIGS) is interaction with DNA. The active-site Proton donor/acceptor is His479. Lys481 lines the substrate pocket.

Belongs to the tyrosyl-DNA phosphodiesterase family. Expressed in the body and at higher levels in the head. Expressed in the delaminating neuroblasts and a few ganglion mother cells in stage 11-14 embryonic central nervous system. Weak expression is seen in gonads at stage 16. Expressed in the brain; expression is regulated by DIP2.

It localises to the nucleus. The protein resides in the cytoplasm. In terms of biological role, DNA repair enzyme that can remove a variety of covalent adducts from DNA through hydrolysis of a 3'-phosphodiester bond, giving rise to DNA with a free 3' phosphate. Catalyzes the hydrolysis of dead-end complexes between DNA and the topoisomerase I active site tyrosine residue. Hydrolyzes 3'-phosphoglycolates on protruding 3' ends on DNA double-strand breaks due to DNA damage by radiation and free radicals. Acts on blunt-ended double-strand DNA breaks and on single-stranded DNA. May have low 3'exonuclease activity and may be able to remove a single nucleoside from the 3'end of DNA and RNA molecules with 3'hydroxyl groups. Has no exonuclease activity towards DNA or RNA with a 3'phosphate. Required for normal polarization of epidermal cells, correct subcellular location of the Crb complex to the apical lateral membrane, and for normal neuronal development during embryonic development. Contributes to maintenance of epithelial cells in response to topoisomerase-1-mediated and oxidative DNA damage. Required for precise axonal bifurcation in mushroom body neurons. Required for maintenance of normal neuronal function. In Drosophila melanogaster (Fruit fly), this protein is Tyrosyl-DNA phosphodiesterase 1.